The following is a 330-amino-acid chain: Aspartate--ammonia ligase (330 aa).

It belongs to the class-II aminoacyl-tRNA synthetase family. AsnA subfamily.

It localises to the cytoplasm. It catalyses the reaction L-aspartate + NH4(+) + ATP = L-asparagine + AMP + diphosphate + H(+). It participates in amino-acid biosynthesis; L-asparagine biosynthesis; L-asparagine from L-aspartate (ammonia route): step 1/1. This is Aspartate--ammonia ligase from Streptococcus pyogenes serotype M5 (strain Manfredo).